A 322-amino-acid polypeptide reads, in one-letter code: Ig gamma-2A chain C region (322 aa).

3 consecutive Ig-like domains span residues 6–98 (PSVY…KKIV), 115–212 (VFIF…KSIS), and 221–317 (PQVY…KSLS). Cystine bridges form between Cys27/Cys82, Cys136/Cys196, and Cys242/Cys300. An N-linked (GlcNAc...) asparagine glycan is attached at Asn172.

The polypeptide is Ig gamma-2A chain C region (Igg-2a) (Rattus norvegicus (Rat)).